The primary structure comprises 249 residues: Aspartate/glutamate leucyltransferase (249 aa).

It belongs to the R-transferase family. Bpt subfamily.

The protein resides in the cytoplasm. The catalysed reaction is N-terminal L-glutamyl-[protein] + L-leucyl-tRNA(Leu) = N-terminal L-leucyl-L-glutamyl-[protein] + tRNA(Leu) + H(+). It carries out the reaction N-terminal L-aspartyl-[protein] + L-leucyl-tRNA(Leu) = N-terminal L-leucyl-L-aspartyl-[protein] + tRNA(Leu) + H(+). In terms of biological role, functions in the N-end rule pathway of protein degradation where it conjugates Leu from its aminoacyl-tRNA to the N-termini of proteins containing an N-terminal aspartate or glutamate. The chain is Aspartate/glutamate leucyltransferase from Azorhizobium caulinodans (strain ATCC 43989 / DSM 5975 / JCM 20966 / LMG 6465 / NBRC 14845 / NCIMB 13405 / ORS 571).